The primary structure comprises 210 residues: Riboflavin kinase (210 aa).

Residues 1–11 (MRPSNPRPPVT) show a composition bias toward pro residues. The tract at residues 1–24 (MRPSNPRPPVTGPDSGPEAPFPIR) is disordered. Residues Thr44 and Asn46 each contribute to the Mg(2+) site. The active-site Nucleophile is Glu113.

It belongs to the flavokinase family. Requires Zn(2+) as cofactor. It depends on Mg(2+) as a cofactor.

The enzyme catalyses riboflavin + ATP = FMN + ADP + H(+). It functions in the pathway cofactor biosynthesis; FMN biosynthesis; FMN from riboflavin (ATP route): step 1/1. Functionally, catalyzes the phosphorylation of riboflavin (vitamin B2) to form flavin mononucleotide (FMN) coenzyme. The sequence is that of Riboflavin kinase (fmn1) from Emericella nidulans (strain FGSC A4 / ATCC 38163 / CBS 112.46 / NRRL 194 / M139) (Aspergillus nidulans).